The sequence spans 197 residues: C-type lectin domain family 3 member A (197 aa).

Residues 1–22 (MAKNGLVICILVITLLLDQTTS) form the signal peptide. 3 disulfide bridges follow: C68/C78, C95/C191, and C167/C183. One can recognise a C-type lectin domain in the interval 74–192 (VHKKCYLASE…CRSSKRYICE (119 aa)).

In terms of tissue distribution, restricted to cartilage and breast. Also expressed in breast cancers.

The protein resides in the secreted. Promotes cell adhesion to laminin-332 and fibronectin. This is C-type lectin domain family 3 member A (CLEC3A) from Homo sapiens (Human).